A 374-amino-acid chain; its full sequence is DNA-directed RNA polymerase subunit alpha (374 aa).

Residues 1 to 270 (MIFDEDSSSV…DQFQQFINFD (270 aa)) form an alpha N-terminal domain (alpha-NTD) region. The interval 282–374 (KDVLPYDSNL…ESLSKQYSEE (93 aa)) is alpha C-terminal domain (alpha-CTD).

It belongs to the RNA polymerase alpha chain family. Homodimer. The RNAP catalytic core consists of 2 alpha, 1 beta, 1 beta' and 1 omega subunit. When a sigma factor is associated with the core the holoenzyme is formed, which can initiate transcription.

It carries out the reaction RNA(n) + a ribonucleoside 5'-triphosphate = RNA(n+1) + diphosphate. Functionally, DNA-dependent RNA polymerase catalyzes the transcription of DNA into RNA using the four ribonucleoside triphosphates as substrates. The polypeptide is DNA-directed RNA polymerase subunit alpha (Ehrlichia ruminantium (strain Gardel)).